The chain runs to 377 residues: Glutamate 5-kinase (377 aa).

Lysine 22 contacts ATP. Positions 62, 149, and 161 each coordinate substrate. ATP is bound by residues 181–182 (TD) and 223–229 (TGGMVTK). Residues 285 to 359 (QGTLVADSGA…GRNTAQLKRF (75 aa)) form the PUA domain.

This sequence belongs to the glutamate 5-kinase family.

The protein resides in the cytoplasm. The catalysed reaction is L-glutamate + ATP = L-glutamyl 5-phosphate + ADP. The protein operates within amino-acid biosynthesis; L-proline biosynthesis; L-glutamate 5-semialdehyde from L-glutamate: step 1/2. Its function is as follows. Catalyzes the transfer of a phosphate group to glutamate to form L-glutamate 5-phosphate. The chain is Glutamate 5-kinase from Bifidobacterium adolescentis (strain ATCC 15703 / DSM 20083 / NCTC 11814 / E194a).